The following is a 421-amino-acid chain: Large ribosomal subunit protein uL4 (421 aa).

Ala2 carries the N-acetylalanine modification. Lys14 carries the N6-acetyllysine modification. Omega-N-methylarginine is present on Arg97. Lys106 bears the N6-acetyllysine mark. Residue Lys239 forms a Glycyl lysine isopeptide (Lys-Gly) (interchain with G-Cter in SUMO2) linkage. Lys259 is subject to N6-acetyllysine. A Phosphothreonine modification is found at Thr266. A phosphoserine mark is found at Ser290 and Ser295. At Arg300 the chain carries Citrulline. Lys327 participates in a covalent cross-link: Glycyl lysine isopeptide (Lys-Gly) (interchain with G-Cter in SUMO2). N6-acetyllysine occurs at positions 333 and 353. The residue at position 364 (Lys364) is an N6-acetyllysine; alternate. Residue Lys364 forms a Glycyl lysine isopeptide (Lys-Gly) (interchain with G-Cter in SUMO1); alternate linkage. The residue at position 365 (Ser365) is a Phosphoserine. Basic and acidic residues predominate over residues 365–379 (SEKIVPEKGAGDKKP). Residues 365–421 (SEKIVPEKGAGDKKPAVGKKGKKPVDAKKLKKPAGKKVVTKKPAEKKPTTEEKKSAA) are disordered. Residues 393 to 404 (KLKKPAGKKVVT) show a composition bias toward basic residues. The span at 406 to 421 (KPAEKKPTTEEKKSAA) shows a compositional bias: basic and acidic residues.

It belongs to the universal ribosomal protein uL4 family. As to quaternary structure, component of the large ribosomal subunit. May bind IPO9 with low affinity. Interacts with RBM3. Citrullinated by PADI4.

It localises to the cytoplasm. Its function is as follows. Component of the large ribosomal subunit. The ribosome is a large ribonucleoprotein complex responsible for the synthesis of proteins in the cell. The sequence is that of Large ribosomal subunit protein uL4 (Rpl4) from Rattus norvegicus (Rat).